A 598-amino-acid polypeptide reads, in one-letter code: MPCVQAQYGSSPQGASPASQSYSYHSSGEYSSDFLTPEFVKFSMDLTNTEITATTSLPSFSTFMDNYSTGYDVKPPCLYQMPLSGQQSSIKVEDIQMHNYQQHSHLPPQSEEMMPHSGSVYYKPSSPPTPTTPGFQVQHSPMWDDPGSLHNFHQNYVATTHMIEQRKTPVSRLSLFSFKQSPPGTPVSSCQMRFDGPLHVPMNPEPAGSHHVVDGQTFAVPNPIRKPASMGFPGLQIGHASQLLDTQVPSPPSRGSPSNEGLCAVCGDNAACQHYGVRTCEGCKGFFKRTVQKNAKYVCLANKNCPVDKRRRNRCQYCRFQKCLAVGMVKEVVRTDSLKGRRGRLPSKPKSPQEPSPPSPPVSLISALVRAHVDSNPAMTSLDYSRFQANPDYQMSGDDTQHIQQFYDLLTGSMEIIRGWAEKIPGFTDLPKADQDLLFESAFLELFVLRLAYRSNPVEGKLIFCNGVVLHRLQCVRGFGEWIDSIVEFSSNLQNMNIDISAFSCIAALAMVTERHGLKEPKRVEELQNKIVNCLKDHVTFNNGGLNRPNYLSKLLGKLPELRTLCTQGLQRIFYLKLEDLVPPPAIIDKLFLDTLPF.

Residues 1–22 (MPCVQAQYGSSPQGASPASQSY) form a disordered region. The span at 8-22 (YGSSPQGASPASQSY) shows a compositional bias: low complexity. Positions 260 to 335 (EGLCAVCGDN…VGMVKEVVRT (76 aa)) form a DNA-binding region, nuclear receptor. 2 consecutive NR C4-type zinc fingers follow at residues 263–283 (CAVCGDNAACQHYGVRTCEGC) and 299–318 (CLANKNCPVDKRRRNRCQYC). Residues 287–314 (FKRTVQKNAKYVCLANKNCPVDKRRRNR) carry the Bipartite nuclear localization signal (NLS1) motif. Positions 337-361 (SLKGRRGRLPSKPKSPQEPSPPSPP) are disordered. A Nuclear localization signal (NLS1) motif is present at residues 338-350 (LKGRRGRLPSKPK). The span at 352–361 (PQEPSPPSPP) shows a compositional bias: pro residues. The NR LBD domain occupies 360-595 (PPVSLISALV…AIIDKLFLDT (236 aa)). A nuclear export sequence (NES1) motif is present at residues 443–452 (FLELFVLRLA). Positions 568-577 (QGLQRIFYLK) match the nuclear export sequence (NES2) motif.

Belongs to the nuclear hormone receptor family. NR4 subfamily. Interacts with SFPQ, NCOR2, SIN3A and HADC1. The interaction with NCOR2 increases in the absence of PITX3. Interacts with PER2.

It localises to the cytoplasm. The protein resides in the nucleus. Transcriptional regulator which is important for the differentiation and maintenance of meso-diencephalic dopaminergic (mdDA) neurons during development. It is crucial for expression of a set of genes such as SLC6A3, SLC18A2, TH and DRD2 which are essential for development of mdDA neurons. The polypeptide is Nuclear receptor subfamily 4 group A member 2 (NR4A2) (Bos taurus (Bovine)).